We begin with the raw amino-acid sequence, 203 residues long: MSEDFKLDATARNDLGKGASRRLRRLADQVPAIIYGGSKAPVNVSVSHNELLKHLQHEAFFSHVIDLNIDGTSESVILKDVQRHPSKAQVLHLDFLRVDKNTKLHKQVPLHFINEATSVGVKTQGGKVVHNLTQLDVTCLPQDLPEFIEVDLAAIEAGQILHISDLKLPKGVISTDLTKGADHDLAVVTILKAKGGESEEAAE.

It belongs to the bacterial ribosomal protein bL25 family. CTC subfamily. In terms of assembly, part of the 50S ribosomal subunit; part of the 5S rRNA/L5/L18/L25 subcomplex. Contacts the 5S rRNA. Binds to the 5S rRNA independently of L5 and L18.

This is one of the proteins that binds to the 5S RNA in the ribosome where it forms part of the central protuberance. The protein is Large ribosomal subunit protein bL25 of Cellvibrio japonicus (strain Ueda107) (Pseudomonas fluorescens subsp. cellulosa).